The following is a 251-amino-acid chain: Small ribosomal subunit protein uS3 (251 aa).

The KH type-2 domain occupies 39–111 (IRELINNFSK…DVDLNILEVK (73 aa)).

This sequence belongs to the universal ribosomal protein uS3 family. In terms of assembly, part of the 30S ribosomal subunit. Forms a tight complex with proteins S10 and S14.

In terms of biological role, binds the lower part of the 30S subunit head. Binds mRNA in the 70S ribosome, positioning it for translation. This is Small ribosomal subunit protein uS3 from Phytoplasma sp. (strain STRAWB1).